The chain runs to 573 residues: 60 kDa heat shock protein, mitochondrial (573 aa).

The N-terminal 26 residues, 1–26 (MLRLPTVLRQMRPVSRALAPHLTRAY), are a transit peptide targeting the mitochondrion. The residue at position 31 (K31) is an N6-succinyllysine. A phosphoserine mark is found at S67 and S70. K75 provides a ligand contact to ATP. The residue at position 75 (K75) is an N6-acetyllysine. Position 82 is an N6-acetyllysine; alternate (K82). K82 carries the N6-succinyllysine; alternate modification. Residue K87 is modified to N6-acetyllysine. Position 90 is a phosphotyrosine (Y90). An N6-acetyllysine modification is found at K91. 111 to 115 (DGTTT) provides a ligand contact to ATP. At K125 the chain carries N6-acetyllysine; alternate. At K125 the chain carries N6-succinyllysine; alternate. K130 carries the N6-acetyllysine modification. Residue K133 is modified to N6-acetyllysine; alternate. N6-succinyllysine; alternate is present on K133. An N6-malonyllysine; alternate modification is found at K133. K156 carries the N6-acetyllysine modification. 5 positions are modified to N6-acetyllysine; alternate: K191, K202, K205, K218, and K236. N6-succinyllysine; alternate occurs at positions 191, 202, 205, 218, and 236. An N6-acetyllysine modification is found at K249. K250 carries the post-translational modification N6-acetyllysine; alternate. An N6-succinyllysine; alternate modification is found at K250. Residues K269 and K292 each carry the N6-acetyllysine modification. Residue K301 is modified to N6-succinyllysine. The residue at position 314 (K314) is an N6-acetyllysine. K352 bears the N6-acetyllysine; alternate mark. An N6-succinyllysine; alternate modification is found at K352. An N6-acetyllysine mark is found at K359 and K389. The residue at position 396 (K396) is an N6-acetyllysine; alternate. K396 bears the N6-succinyllysine; alternate mark. S410 carries the phosphoserine modification. ATP is bound at residue G440. An N6-acetyllysine; alternate modification is found at K455. N6-succinyllysine; alternate is present on K455. K469 carries the post-translational modification N6-acetyllysine. The residue at position 481 (K481) is an N6-acetyllysine; alternate. An N6-succinyllysine; alternate modification is found at K481. Phosphoserine is present on S488. D520 is a binding site for ATP. Residue K551 forms a Glycyl lysine isopeptide (Lys-Gly) (interchain with G-Cter in SUMO2) linkage.

Belongs to the chaperonin (HSP60) family. Homoheptamer arranged in a ring structure. The functional units of these chaperonins consist of heptameric rings of the large subunit Hsp60, which function as a back-to-back double ring. Interacts with 2 heptameric Hsp10 rings to form the symmetrical football complex. Interacts with HRAS. Interacts with ATAD3A. Interacts with ETFBKMT and EEF1AKMT3. Interacts with MFHAS1.

The protein resides in the mitochondrion matrix. The catalysed reaction is ATP + H2O + a folded polypeptide = ADP + phosphate + an unfolded polypeptide.. Functionally, chaperonin implicated in mitochondrial protein import and macromolecular assembly. Together with Hsp10, facilitates the correct folding of imported proteins. May also prevent misfolding and promote the refolding and proper assembly of unfolded polypeptides generated under stress conditions in the mitochondrial matrix. The functional units of these chaperonins consist of heptameric rings of the large subunit Hsp60, which function as a back-to-back double ring. In a cyclic reaction, Hsp60 ring complexes bind one unfolded substrate protein per ring, followed by the binding of ATP and association with 2 heptameric rings of the co-chaperonin Hsp10. This leads to sequestration of the substrate protein in the inner cavity of Hsp60 where, for a certain period of time, it can fold undisturbed by other cell components. Synchronous hydrolysis of ATP in all Hsp60 subunits results in the dissociation of the chaperonin rings and the release of ADP and the folded substrate protein. This Cricetulus griseus (Chinese hamster) protein is 60 kDa heat shock protein, mitochondrial (HSPD1).